A 241-amino-acid polypeptide reads, in one-letter code: 1-(5-phosphoribosyl)-5-[(5-phosphoribosylamino)methylideneamino] imidazole-4-carboxamide isomerase (241 aa).

The Proton acceptor role is filled by Asp10. Asp131 (proton donor) is an active-site residue.

Belongs to the HisA/HisF family.

It localises to the cytoplasm. The catalysed reaction is 1-(5-phospho-beta-D-ribosyl)-5-[(5-phospho-beta-D-ribosylamino)methylideneamino]imidazole-4-carboxamide = 5-[(5-phospho-1-deoxy-D-ribulos-1-ylimino)methylamino]-1-(5-phospho-beta-D-ribosyl)imidazole-4-carboxamide. It participates in amino-acid biosynthesis; L-histidine biosynthesis; L-histidine from 5-phospho-alpha-D-ribose 1-diphosphate: step 4/9. In Bifidobacterium longum subsp. infantis (strain ATCC 15697 / DSM 20088 / JCM 1222 / NCTC 11817 / S12), this protein is 1-(5-phosphoribosyl)-5-[(5-phosphoribosylamino)methylideneamino] imidazole-4-carboxamide isomerase.